A 364-amino-acid chain; its full sequence is Flagellar P-ring protein (364 aa).

Residues 1 to 21 (MNVFKVFCLMVLLGWQLPAMA) form the signal peptide.

Belongs to the FlgI family. As to quaternary structure, the basal body constitutes a major portion of the flagellar organelle and consists of four rings (L,P,S, and M) mounted on a central rod.

The protein localises to the periplasm. The protein resides in the bacterial flagellum basal body. Assembles around the rod to form the L-ring and probably protects the motor/basal body from shearing forces during rotation. This is Flagellar P-ring protein from Pseudoalteromonas translucida (strain TAC 125).